The following is a 179-amino-acid chain: uncharacterized protein (179 aa).

Residues Ile-139–Glu-172 adopt a coiled-coil conformation.

This is an uncharacterized protein from Methanocaldococcus jannaschii (strain ATCC 43067 / DSM 2661 / JAL-1 / JCM 10045 / NBRC 100440) (Methanococcus jannaschii).